A 122-amino-acid chain; its full sequence is Large ribosomal subunit protein uL14c (122 aa).

Belongs to the universal ribosomal protein uL14 family. As to quaternary structure, part of the 50S ribosomal subunit.

It localises to the plastid. The protein localises to the chloroplast. Binds to 23S rRNA. The protein is Large ribosomal subunit protein uL14c of Panax ginseng (Korean ginseng).